We begin with the raw amino-acid sequence, 256 residues long: 5-keto-4-deoxy-D-glucarate aldolase (256 aa).

The active-site Proton acceptor is the His-50. Gln-151 lines the substrate pocket. Glu-153 serves as a coordination point for Mg(2+). Positions 178 and 179 each coordinate substrate. Asp-179 is a Mg(2+) binding site.

It belongs to the HpcH/HpaI aldolase family. KDGluc aldolase subfamily. In terms of assembly, homohexamer; trimer of dimers. Mg(2+) serves as cofactor.

It carries out the reaction 5-dehydro-4-deoxy-D-glucarate = 2-hydroxy-3-oxopropanoate + pyruvate. The catalysed reaction is 2-dehydro-3-deoxy-D-glucarate = 2-hydroxy-3-oxopropanoate + pyruvate. It participates in carbohydrate acid metabolism; galactarate degradation; D-glycerate from galactarate: step 2/3. Its function is as follows. Catalyzes the reversible retro-aldol cleavage of both 5-keto-4-deoxy-D-glucarate and 2-keto-3-deoxy-D-glucarate to pyruvate and tartronic semialdehyde. The polypeptide is 5-keto-4-deoxy-D-glucarate aldolase (Escherichia coli (strain K12 / DH10B)).